A 178-amino-acid polypeptide reads, in one-letter code: Bifunctional protein PyrR (178 aa).

The short motif at 99–111 (VIIVDDVLYTCRT) is the PRPP-binding element.

This sequence belongs to the purine/pyrimidine phosphoribosyltransferase family. PyrR subfamily. Homodimer and homohexamer; in equilibrium.

The enzyme catalyses UMP + diphosphate = 5-phospho-alpha-D-ribose 1-diphosphate + uracil. Regulates transcriptional attenuation of the pyrimidine nucleotide (pyr) operon by binding in a uridine-dependent manner to specific sites on pyr mRNA. This disrupts an antiterminator hairpin in the RNA and favors formation of a downstream transcription terminator, leading to a reduced expression of downstream genes. Functionally, also displays a weak uracil phosphoribosyltransferase activity which is not physiologically significant. The sequence is that of Bifunctional protein PyrR from Clostridium perfringens (strain ATCC 13124 / DSM 756 / JCM 1290 / NCIMB 6125 / NCTC 8237 / Type A).